Reading from the N-terminus, the 369-residue chain is MSDWDKTMDLLFGFVTGHIHSRMFETILKFSICDLLEDGPKHYSEISKIIGFKNESYCYRLMRYFVPYKLFNESVVQVGLFSKTPSSTQFSKNGTLKNLGRFHCQDHHYRIFESLPKTLEMGKNQGPSSIGLSSFWEHFETDESYKQLFHNAMKDYTSLIIDRLISKISLSPNFKTVVDIGGSHGFLIGKLLESNPNIHGINFDLENIINSSTSKNENFQHPRLKHVSGDFFNSVPEADCYILKYILHDWSDEKCITILNNIHKSLKPNGKLFINDLVLDPSNYTKEAVFKDILMMQYFDAKERSINEWHQLFEKCGFKIDSVDTSISPQLMIVSKINSSNINLNDCTNFNSEIVEEKLKNSLPQFVNC.

Residues glycine 181, aspartate 204, 229–231, aspartate 230, phenylalanine 231, and lysine 244 each bind S-adenosyl-L-methionine; that span reads GDF. Histidine 248 (proton acceptor) is an active-site residue.

This sequence belongs to the class I-like SAM-binding methyltransferase superfamily. Cation-independent O-methyltransferase family. COMT subfamily.

It carries out the reaction resorcinol + S-adenosyl-L-methionine = 3-methoxyphenol + S-adenosyl-L-homocysteine + H(+). S-adenosyl-L-methionine dependent O-methyltransferase that may be involved in modifying resorcinol ring to synthesize a variant of 4-methyl-5-pentylbenzene-1,3-diol. In Dictyostelium discoideum (Social amoeba), this protein is O-methyltransferase 12 (omt12).